We begin with the raw amino-acid sequence, 352 residues long: Protein RecA (352 aa).

67 to 74 (GPESSGKT) is an ATP binding site.

It belongs to the RecA family.

The protein localises to the cytoplasm. Functionally, can catalyze the hydrolysis of ATP in the presence of single-stranded DNA, the ATP-dependent uptake of single-stranded DNA by duplex DNA, and the ATP-dependent hybridization of homologous single-stranded DNAs. It interacts with LexA causing its activation and leading to its autocatalytic cleavage. This chain is Protein RecA, found in Chlamydia trachomatis serovar D (strain ATCC VR-885 / DSM 19411 / UW-3/Cx).